The following is a 246-amino-acid chain: Serine protease 1 (246 aa).

The signal sequence occupies residues 1–15 (MSALLILALVGAAVA). Positions 16–23 (FPLEDDDK) are cleaved as a propeptide — activation peptide. Positions 24-244 (IVGGYTCPEH…FVGWIQDTIA (221 aa)) constitute a Peptidase S1 domain. Disulfide bonds link cysteine 30/cysteine 160, cysteine 48/cysteine 64, cysteine 132/cysteine 233, cysteine 139/cysteine 206, cysteine 171/cysteine 185, and cysteine 196/cysteine 220. Histidine 63 functions as the Charge relay system in the catalytic mechanism. 4 residues coordinate Ca(2+): glutamate 75, asparagine 77, valine 80, and glutamate 85. Catalysis depends on aspartate 107, which acts as the Charge relay system. The active-site Charge relay system is the serine 200.

It belongs to the peptidase S1 family. As to quaternary structure, interacts with SERPINA1. Ca(2+) is required as a cofactor.

Its subcellular location is the secreted. The protein resides in the extracellular space. It carries out the reaction Preferential cleavage: Arg-|-Xaa, Lys-|-Xaa.. In Rattus norvegicus (Rat), this protein is Serine protease 1.